A 601-amino-acid polypeptide reads, in one-letter code: Invasin CotH3 (601 aa).

The N-terminal stretch at 1–17 (MKLSIISAAFLVAITHA) is a signal peptide. Residues N28, N85, N170, N324, N449, N527, N541, N554, N561, and N571 are each glycosylated (N-linked (GlcNAc...) asparagine). Positions 539-579 (SANGTTAAAPAPAAGNSTGKGGNQSISSSASSNKTSAQSTS) are enriched in low complexity. A disordered region spans residues 539 to 581 (SANGTTAAAPAPAAGNSTGKGGNQSISSSASSNKTSAQSTSGA). Residue S579 is the site of GPI-anchor amidated serine attachment. Residues 580–601 (GASRSKTAPIVLAISALALLVF) constitute a propeptide, removed in mature form.

In terms of assembly, interacts with HSPA5/BiP on the cell surface of host nasal epithelial cells.

The protein localises to the cell membrane. Its function is as follows. Promotes invasion of host epithelial cells by adhering to receptors on the host cell surface to facilitate endocytosis of the pathogen into host cells. Binds HSPA5/BiP protein on the cell surface of host nasal epithelial cells. This chain is Invasin CotH3, found in Rhizopus delemar (strain RA 99-880 / ATCC MYA-4621 / FGSC 9543 / NRRL 43880) (Mucormycosis agent).